Here is a 247-residue protein sequence, read N- to C-terminus: uncharacterized protein (247 aa).

4–28 (ALVTGGSRGIGRATALLLAQEGYTV) is an NADP(+) binding site. Residue S142 participates in substrate binding. Catalysis depends on Y156, which acts as the Proton acceptor.

This sequence belongs to the short-chain dehydrogenases/reductases (SDR) family.

This is an uncharacterized protein from Escherichia coli (strain K12).